A 356-amino-acid chain; its full sequence is Tyrosine recombinase XerS (356 aa).

Residues 16-121 (TMPWYILEYY…ALSSLYKYLT (106 aa)) form the Core-binding (CB) domain. The Tyr recombinase domain maps to 169–354 (EFLQYIDREY…VNDEQKNALN (186 aa)). Residues arginine 210, lysine 234, histidine 306, arginine 309, and histidine 332 contribute to the active site. Residue tyrosine 341 is the O-(3'-phospho-DNA)-tyrosine intermediate of the active site.

It belongs to the 'phage' integrase family. XerS subfamily.

The protein resides in the cytoplasm. With respect to regulation, ftsK is required for recombination. Its function is as follows. Site-specific tyrosine recombinase, which acts by catalyzing the cutting and rejoining of the recombining DNA molecules. Essential to convert dimers of the bacterial chromosome into monomers to permit their segregation at cell division. This is Tyrosine recombinase XerS from Streptococcus gordonii (strain Challis / ATCC 35105 / BCRC 15272 / CH1 / DL1 / V288).